A 1065-amino-acid polypeptide reads, in one-letter code: NLR family CARD domain-containing protein 3 (1065 aa).

Basic and acidic residues predominate over residues 1 to 10; it reads MRKQEVRTGR. The interval 1 to 62 is disordered; the sequence is MRKQEVRTGR…PLGPCSNDSR (62 aa). Residues 139–460 form the NACHT domain; the sequence is RVSITIGVAG…YCFTHLSLQE (322 aa). 145–152 lines the ATP pocket; the sequence is GVAGMGKT. Residues 457-460 carry the TRAF6-binding motif; the sequence is SLQE. 16 LRR repeats span residues 617 to 639, 641 to 663, 665 to 688, 693 to 716, 721 to 744, 749 to 772, 777 to 800, 805 to 828, 833 to 856, 861 to 884, 889 to 912, 917 to 940, 945 to 968, 973 to 996, 1001 to 1029, and 1031 to 1052; these read EANL…LLYC, KLRL…VLSG, DCRI…ALAR, NRSL…ALAD, NRTL…SMAE, NRTL…RMAD, NRSL…ALAE, NQGL…ALMG, NQTL…AIAH, NSTL…AIAV, NRTL…ALGQ, NRSL…AVAR, NTAL…VLGE, NRTL…ALAN, NSSL…LSGN, and RLQH…MISE.

This sequence belongs to the NLRP family. As to quaternary structure, directly interacts (via CARD) with TMEM173/STING; this interaction reduces TMEM173 trafficking to the perinuclear region in response to interferon stimulatory DNA. Also interacts, but to a lesser extent, with TBK1. Interacts with TRAF6; this interaction results in decreased TRAF6 'Lys-63'-linked polyubiquitination, but leaves 'Lys-48'-linked chains unchanged, promoting TRAF6 protein degradation. Interacts with PIK3R1/PIK3R2; this interaction disrupts the association between PIK3R1/PIK3R2 and the p110 catalytic subunit PIK3CA/PIK3CB/PIK3CD and reduces PIK3R1/PIK3R2 activation. Weakly interacts with PYCARD/ASC. Interacts with CASP1 and CASP5.

It is found in the cytoplasm. Negative regulator of the innate immune response. Attenuates signaling pathways activated by Toll-like receptors (TLRs) and the DNA sensor STING/TMEM173 in response to pathogen-associated molecular patterns, such as intracellular poly(dA:dT), but not poly(I:C), or in response to DNA virus infection, including that of Herpes simplex virus 1 (HSV1). May affect TLR4 signaling by acting at the level of TRAF6 ubiquitination, decreasing the activating 'Lys-63'-linked ubiquitination and leaving unchanged the degradative 'Lys-48'-linked ubiquitination. Inhibits the PI3K-AKT-mTOR pathway possibly by directly interacting with the posphatidylinositol 3-kinase regulatory subunit p85 (PIK3R1/PIK3R2) and disrupting the association between PIK3R1/PIK3R2 and the catalytic subunit p110 (PIK3CA/PIK3CB/PIK3CD) and reducing PIK3R1/PIK3R2 activation. Via its regulation of the PI3K-AKT-mTOR pathway, controls cell proliferation, predominantly in intestinal epithelial cells. May also affect NOD1- or NOD2-mediated NF-kappa-B activation. Might also affect the inflammatory response by preventing NLRP3 inflammasome formation, CASP1 cleavage and IL1B maturation. In Homo sapiens (Human), this protein is NLR family CARD domain-containing protein 3 (NLRC3).